Here is a 408-residue protein sequence, read N- to C-terminus: Chaperone protein dnaJ 1, mitochondrial (408 aa).

The N-terminal 26 residues, 1–26 (MRRFNWVLRHVQARRTFDSAIGLRQG), are a transit peptide targeting the mitochondrion. One can recognise a J domain in the interval 48–113 (NYYDVLGVSP…ERREEYDKLQ (66 aa)). Residues 173–247 (GCTKRLSFDA…CRGSGIVEGT (75 aa)) form a CR-type zinc finger. Zn(2+)-binding residues include C186, C189, C203, C206, C221, C224, C235, and C238. CXXCXGXG motif repeat units follow at residues 186–193 (CDSCDGLG), 203–210 (CPTCRGVG), 221–228 (CQTCKGTG), and 235–242 (CMSCRGSG).

The protein belongs to the DnaJ family. B/II subfamily. Homodimer. The cofactor is Zn(2+). As to expression, ubiquitous.

Its subcellular location is the mitochondrion. Plays a continuous role in plant development probably in the structural organization of compartments. The sequence is that of Chaperone protein dnaJ 1, mitochondrial (ATJ1) from Arabidopsis thaliana (Mouse-ear cress).